The sequence spans 336 residues: MSNYAAGLGKPGSGKRRIRDLLNQPDNRVCADCGASDPKWASANIGVFICLKCCGVHRSLGTHISKVLSVTLDEWSDEEVDSMIEIGGNASANSIYEAFLPDTCSKPGPDVNHDQRMRFIRAKYELQEFLKPSLRITSGKGSTKSSAFLTSSLSRKIMDSFRTNSSSQTMFQEGMVEFIGLLKVTIKKGTNLAIRDMMSSDPYVVLNLGKQKLQTTVMNSNLNPVWNQELMLSVPESYGPVKLQVYDYDTFSADDIMGEADIDIQPLITSAMAFGDPEMFGDMQIGKWLKSHDNPLIDDSIINIVDGKVKQEVQIKLQNVESGELELEMEWLPLDQ.

The Arf-GAP domain maps to 15–137 (KRRIRDLLNQ…EFLKPSLRIT (123 aa)). The C4-type zinc-finger motif lies at 30 to 53 (CADCGASDPKWASANIGVFICLKC). A C2 domain is found at 162–280 (RTNSSSQTMF…AMAFGDPEMF (119 aa)). Residues Asp-249, Ser-252, and Asp-255 each coordinate Ca(2+).

Ca(2+) serves as cofactor.

In terms of biological role, GTPase-activating protein (GAP) for ADP ribosylation factor (ARF). The chain is Probable ADP-ribosylation factor GTPase-activating protein AGD13 (AGD13) from Arabidopsis thaliana (Mouse-ear cress).